Reading from the N-terminus, the 208-residue chain is Ribosomal RNA small subunit methyltransferase G (208 aa).

S-adenosyl-L-methionine is bound by residues glycine 73, leucine 78, 127–128 (VE), and arginine 141.

The protein belongs to the methyltransferase superfamily. RNA methyltransferase RsmG family.

The protein resides in the cytoplasm. It carries out the reaction guanosine(527) in 16S rRNA + S-adenosyl-L-methionine = N(7)-methylguanosine(527) in 16S rRNA + S-adenosyl-L-homocysteine. Functionally, specifically methylates the N7 position of guanine in position 527 of 16S rRNA. The sequence is that of Ribosomal RNA small subunit methyltransferase G from Cereibacter sphaeroides (strain ATCC 17025 / ATH 2.4.3) (Rhodobacter sphaeroides).